The primary structure comprises 121 residues: Spermidine export protein MdtJ (121 aa).

Position 1 (M1) is a topological domain, cytoplasmic. Residues 2–22 traverse the membrane as a helical segment; that stretch reads YIYWILLGLAVATEITGTLSM. Residues 23–31 lie on the Periplasmic side of the membrane; the sequence is KWASVSEGN. A helical membrane pass occupies residues 32–52; sequence GGFILMLVMISLSYIFLSFAV. Over 53-54 the chain is Cytoplasmic; sequence KK. The chain crosses the membrane as a helical span at residues 55–75; it reads IALGVAYALWEGIGILFITLF. The Periplasmic segment spans residues 76-81; the sequence is SVLLFD. A helical transmembrane segment spans residues 82–102; the sequence is ESLSLMKIAGLTTLVAGIVLI. The Cytoplasmic segment spans residues 103 to 121; that stretch reads KSGTRKARKPELEVNHGAV.

Belongs to the drug/metabolite transporter (DMT) superfamily. Small multidrug resistance (SMR) (TC 2.A.7.1) family. MdtJ subfamily. Forms a complex with MdtI.

It is found in the cell inner membrane. Functionally, catalyzes the excretion of spermidine. This is Spermidine export protein MdtJ (mdtJ) from Escherichia coli O6:H1 (strain CFT073 / ATCC 700928 / UPEC).